We begin with the raw amino-acid sequence, 396 residues long: Phosphoglycerate kinase (396 aa).

Substrate is bound by residues 21–23 (DFN), arginine 36, 59–62 (HFDR), arginine 118, and arginine 151. ATP is bound by residues lysine 201, glutamate 323, and 353–356 (GGDT).

It belongs to the phosphoglycerate kinase family. Monomer.

The protein localises to the cytoplasm. The enzyme catalyses (2R)-3-phosphoglycerate + ATP = (2R)-3-phospho-glyceroyl phosphate + ADP. The protein operates within carbohydrate degradation; glycolysis; pyruvate from D-glyceraldehyde 3-phosphate: step 2/5. The polypeptide is Phosphoglycerate kinase (Caulobacter sp. (strain K31)).